The chain runs to 101 residues: Guanyl-specific ribonuclease Po1 (101 aa).

Pyrrolidone carboxylic acid is present on Gln1. Cystine bridges form between Cys7–Cys84, Cys9–Cys99, and Cys48–Cys82. His36 is an active-site residue. Catalysis depends on Glu54, which acts as the Proton acceptor. The active-site Proton donor is His87.

The protein belongs to the ribonuclease N1/T1 family.

The catalysed reaction is [RNA] containing guanosine + H2O = an [RNA fragment]-3'-guanosine-3'-phosphate + a 5'-hydroxy-ribonucleotide-3'-[RNA fragment].. Its activity is regulated as follows. Inhibited by divalent cations. Inhibition decreases in the order zinc, lead, cadmium, nickel, mercury. In Pleurotus ostreatus (Oyster mushroom), this protein is Guanyl-specific ribonuclease Po1.